The primary structure comprises 680 residues: tRNA 5-methylaminomethyl-2-thiouridine biosynthesis bifunctional protein MnmC (680 aa).

The segment at 1-267 (MTAEPNKPCQ…MAAILSSDAP (267 aa)) is tRNA (mnm(5)s(2)U34)-methyltransferase. The interval 273-680 (IGGGLASAHL…LRKLLKGKSL (408 aa)) is FAD-dependent cmnm(5)s(2)U34 oxidoreductase.

In the N-terminal section; belongs to the methyltransferase superfamily. tRNA (mnm(5)s(2)U34)-methyltransferase family. The protein in the C-terminal section; belongs to the DAO family. FAD is required as a cofactor.

The protein localises to the cytoplasm. The enzyme catalyses 5-aminomethyl-2-thiouridine(34) in tRNA + S-adenosyl-L-methionine = 5-methylaminomethyl-2-thiouridine(34) in tRNA + S-adenosyl-L-homocysteine + H(+). In terms of biological role, catalyzes the last two steps in the biosynthesis of 5-methylaminomethyl-2-thiouridine (mnm(5)s(2)U) at the wobble position (U34) in tRNA. Catalyzes the FAD-dependent demodification of cmnm(5)s(2)U34 to nm(5)s(2)U34, followed by the transfer of a methyl group from S-adenosyl-L-methionine to nm(5)s(2)U34, to form mnm(5)s(2)U34. This Shewanella sp. (strain W3-18-1) protein is tRNA 5-methylaminomethyl-2-thiouridine biosynthesis bifunctional protein MnmC.